The chain runs to 2179 residues: Axotactin (2179 aa).

The N-terminal stretch at methionine 1–glycine 18 is a signal peptide. Topologically, residues leucine 19–glutamine 1816 are extracellular. Asparagine 23 and asparagine 52 each carry an N-linked (GlcNAc...) asparagine glycan. Residues glycine 59–methionine 107 form a disordered region. The segment covering threonine 74 to asparagine 97 has biased composition (gly residues). N-linked (GlcNAc...) asparagine glycosylation occurs at asparagine 103. The BPTI/Kunitz inhibitor domain occupies cysteine 119–cysteine 170. Disulfide bonds link cysteine 119–cysteine 170, cysteine 128–cysteine 152, and cysteine 144–cysteine 166. The segment at tyrosine 201–glycine 220 is disordered. Positions glycine 211–glycine 220 are enriched in gly residues. Positions lysine 242 to cysteine 438 constitute a Laminin G-like 1 domain. The N-linked (GlcNAc...) asparagine glycan is linked to asparagine 249. Cystine bridges form between cysteine 405-cysteine 438, cysteine 442-cysteine 455, cysteine 449-cysteine 464, and cysteine 466-cysteine 476. Residues serine 439 to aspartate 477 form the EGF-like 1 domain. 2 consecutive Laminin G-like domains span residues alanine 481–valine 664 and glutamate 660–cysteine 839. 3 N-linked (GlcNAc...) asparagine glycosylation sites follow: asparagine 542, asparagine 571, and asparagine 741. 4 cysteine pairs are disulfide-bonded: cysteine 808-cysteine 839, cysteine 845-cysteine 857, cysteine 851-cysteine 866, and cysteine 868-cysteine 878. Residues tyrosine 841 to histidine 879 form the EGF-like 2 domain. Residues asparagine 925, asparagine 1000, asparagine 1019, and asparagine 1026 are each glycosylated (N-linked (GlcNAc...) asparagine). Positions tyrosine 1087–cysteine 1259 constitute a Laminin G-like 4 domain. 4 disulfide bridges follow: cysteine 1231–cysteine 1259, cysteine 1263–cysteine 1274, cysteine 1268–cysteine 1283, and cysteine 1285–cysteine 1296. Residues lysine 1260 to glutamate 1297 enclose the EGF-like 3 domain. Residues arginine 1316 to cysteine 1526 enclose the Laminin G-like 5 domain. N-linked (GlcNAc...) asparagine glycosylation occurs at asparagine 1393. Disulfide bonds link cysteine 1494-cysteine 1526, cysteine 1530-cysteine 1541, cysteine 1535-cysteine 1552, and cysteine 1554-cysteine 1564. The 39-residue stretch at glutamine 1527–serine 1565 folds into the EGF-like 4 domain. The 197-residue stretch at glycine 1569–cysteine 1765 folds into the Laminin G-like 6 domain. 4 N-linked (GlcNAc...) asparagine glycosylation sites follow: asparagine 1667, asparagine 1707, asparagine 1751, and asparagine 1782. Cysteine 1722 and cysteine 1765 form a disulfide bridge. Residues valine 1817 to valine 1837 form a helical membrane-spanning segment. At tyrosine 1838–aspartate 2179 the chain is on the cytoplasmic side. 2 disordered regions span residues tyrosine 1891–phenylalanine 2141 and serine 2156–aspartate 2179. Polar residues predominate over residues glycine 1916–serine 1930. Acidic residues predominate over residues glutamate 1940–alanine 1949. Positions alanine 1954–alanine 1966 are enriched in basic and acidic residues. Composition is skewed to polar residues over residues threonine 1969 to proline 1981 and glutamate 2010 to glutamine 2025. Residues proline 2064–alanine 2079 show a composition bias toward basic and acidic residues. Residues glutamine 2082 to glutamine 2091 show a composition bias toward low complexity. Composition is skewed to polar residues over residues serine 2092–proline 2105 and proline 2165–aspartate 2179.

Its subcellular location is the cell projection. The protein localises to the axon. It is found in the membrane. Functionally, may have serine protease inhibitor activity. Might play a role in the glial-neuronal signaling pathway that is important in establishing the electrical properties of axonal membranes. This is Axotactin from Drosophila melanogaster (Fruit fly).